The following is a 245-amino-acid chain: 1-(5-phosphoribosyl)-5-[(5-phosphoribosylamino)methylideneamino] imidazole-4-carboxamide isomerase (245 aa).

Catalysis depends on D7, which acts as the Proton acceptor. D129 acts as the Proton donor in catalysis.

The protein belongs to the HisA/HisF family.

It localises to the cytoplasm. The catalysed reaction is 1-(5-phospho-beta-D-ribosyl)-5-[(5-phospho-beta-D-ribosylamino)methylideneamino]imidazole-4-carboxamide = 5-[(5-phospho-1-deoxy-D-ribulos-1-ylimino)methylamino]-1-(5-phospho-beta-D-ribosyl)imidazole-4-carboxamide. The protein operates within amino-acid biosynthesis; L-histidine biosynthesis; L-histidine from 5-phospho-alpha-D-ribose 1-diphosphate: step 4/9. The protein is 1-(5-phosphoribosyl)-5-[(5-phosphoribosylamino)methylideneamino] imidazole-4-carboxamide isomerase of Alteromonas mediterranea (strain DSM 17117 / CIP 110805 / LMG 28347 / Deep ecotype).